A 396-amino-acid polypeptide reads, in one-letter code: Ornithine aminotransferase (396 aa).

Lys255 carries the N6-(pyridoxal phosphate)lysine modification.

It belongs to the class-III pyridoxal-phosphate-dependent aminotransferase family. OAT subfamily. Requires pyridoxal 5'-phosphate as cofactor.

The protein resides in the cytoplasm. It carries out the reaction a 2-oxocarboxylate + L-ornithine = L-glutamate 5-semialdehyde + an L-alpha-amino acid. It functions in the pathway amino-acid biosynthesis; L-proline biosynthesis; L-glutamate 5-semialdehyde from L-ornithine: step 1/1. Catalyzes the interconversion of ornithine to glutamate semialdehyde. The protein is Ornithine aminotransferase of Staphylococcus epidermidis (strain ATCC 35984 / DSM 28319 / BCRC 17069 / CCUG 31568 / BM 3577 / RP62A).